The following is a 141-amino-acid chain: Small ribosomal subunit protein bS6 (141 aa).

The segment at 97 to 141 is disordered; that stretch reads TGQSEMLKAEENRSERRERRDRPEHSDSADGDDGDNSDVSDNADE. Residues 103-124 show a composition bias toward basic and acidic residues; that stretch reads LKAEENRSERRERRDRPEHSDS. Acidic residues predominate over residues 125–141; it reads ADGDDGDNSDVSDNADE.

The protein belongs to the bacterial ribosomal protein bS6 family.

In terms of biological role, binds together with bS18 to 16S ribosomal RNA. The sequence is that of Small ribosomal subunit protein bS6 from Pseudomonas syringae pv. syringae (strain B728a).